Consider the following 188-residue polypeptide: Peptidyl-tRNA hydrolase (188 aa).

Position 14 (tyrosine 14) interacts with tRNA. The active-site Proton acceptor is histidine 19. Residues tyrosine 64, asparagine 66, and asparagine 112 each contribute to the tRNA site.

This sequence belongs to the PTH family. In terms of assembly, monomer.

The protein localises to the cytoplasm. It catalyses the reaction an N-acyl-L-alpha-aminoacyl-tRNA + H2O = an N-acyl-L-amino acid + a tRNA + H(+). In terms of biological role, hydrolyzes ribosome-free peptidyl-tRNAs (with 1 or more amino acids incorporated), which drop off the ribosome during protein synthesis, or as a result of ribosome stalling. Its function is as follows. Catalyzes the release of premature peptidyl moieties from peptidyl-tRNA molecules trapped in stalled 50S ribosomal subunits, and thus maintains levels of free tRNAs and 50S ribosomes. This chain is Peptidyl-tRNA hydrolase, found in Clostridium perfringens (strain SM101 / Type A).